The following is a 214-amino-acid chain: 3-isopropylmalate dehydratase small subunit (214 aa).

This sequence belongs to the LeuD family. LeuD type 1 subfamily. Heterodimer of LeuC and LeuD.

It carries out the reaction (2R,3S)-3-isopropylmalate = (2S)-2-isopropylmalate. The protein operates within amino-acid biosynthesis; L-leucine biosynthesis; L-leucine from 3-methyl-2-oxobutanoate: step 2/4. Its function is as follows. Catalyzes the isomerization between 2-isopropylmalate and 3-isopropylmalate, via the formation of 2-isopropylmaleate. The chain is 3-isopropylmalate dehydratase small subunit from Pseudomonas putida (strain W619).